A 182-amino-acid polypeptide reads, in one-letter code: MPEEPTGSTAPQDRPPRRLRLLLSVAATVLALDIVTKVLAVKLLPPGQPVPIIGDTVTWTLVRNSGAAFSMATGYTWVLTLIATGVVVGIFWMGRRLVSPWWAVGLGMILGGAMGNLVDRFFRAPGPLRGHVVDFLSVGWWPVFNVADPSVVGGAILLVVLSIFGYDFDTVGRRKKADQSRD.

Helical transmembrane passes span 21–41 (LLLS…VLAV), 74–94 (GYTW…FWMG), and 98–118 (VSPW…GNLV). Residues D134 and D148 contribute to the active site. Residues 146 to 166 (VADPSVVGGAILLVVLSIFGY) traverse the membrane as a helical segment.

The protein belongs to the peptidase A8 family.

Its subcellular location is the cell membrane. The catalysed reaction is Release of signal peptides from bacterial membrane prolipoproteins. Hydrolyzes -Xaa-Yaa-Zaa-|-(S,diacylglyceryl)Cys-, in which Xaa is hydrophobic (preferably Leu), and Yaa (Ala or Ser) and Zaa (Gly or Ala) have small, neutral side chains.. It participates in protein modification; lipoprotein biosynthesis (signal peptide cleavage). In terms of biological role, this protein specifically catalyzes the removal of signal peptides from prolipoproteins. This is Lipoprotein signal peptidase from Mycobacterium avium (strain 104).